The following is a 245-amino-acid chain: Ribonuclease 3 (245 aa).

Positions 17-146 constitute an RNase III domain; it reads FTDKMKSLGL…FVGALYLDQG (130 aa). Glu-59 lines the Mg(2+) pocket. Residue Asp-63 is part of the active site. Mg(2+)-binding residues include Asp-132 and Glu-135. The active site involves Glu-135. The DRBM domain maps to 172–241; the sequence is DFKTQFQEYV…AEQAYKLMKN (70 aa).

It belongs to the ribonuclease III family. Homodimer. Mg(2+) is required as a cofactor.

It is found in the cytoplasm. The enzyme catalyses Endonucleolytic cleavage to 5'-phosphomonoester.. In terms of biological role, digests double-stranded RNA. Involved in the processing of primary rRNA transcript to yield the immediate precursors to the large and small rRNAs (23S and 16S). Processes some mRNAs, and tRNAs when they are encoded in the rRNA operon. Processes pre-crRNA and tracrRNA of type II CRISPR loci if present in the organism. In Staphylococcus epidermidis (strain ATCC 35984 / DSM 28319 / BCRC 17069 / CCUG 31568 / BM 3577 / RP62A), this protein is Ribonuclease 3.